The following is a 653-amino-acid chain: DNA mismatch repair protein MutL (653 aa).

The tract at residues 375–425 (QNTPDYPRKAPRDNDRDESDNPQVRERAVSNPWVASPKTASTGKERYGSAS) is disordered. Residues 380–389 (YPRKAPRDND) are compositionally biased toward basic and acidic residues.

This sequence belongs to the DNA mismatch repair MutL/HexB family.

Its function is as follows. This protein is involved in the repair of mismatches in DNA. It is required for dam-dependent methyl-directed DNA mismatch repair. May act as a 'molecular matchmaker', a protein that promotes the formation of a stable complex between two or more DNA-binding proteins in an ATP-dependent manner without itself being part of a final effector complex. The polypeptide is DNA mismatch repair protein MutL (Vibrio cholerae serotype O1 (strain ATCC 39541 / Classical Ogawa 395 / O395)).